Reading from the N-terminus, the 663-residue chain is UvrABC system protein B (663 aa).

A compositionally biased stretch (basic and acidic residues) spans 1–10 (MIDKRDDKPF). Positions 1–23 (MIDKRDDKPFKLKSKYKPSGDQP) are disordered. In terms of domain architecture, Helicase ATP-binding spans 31-418 (DNIEGGEKAQ…TNTIIEQIIR (388 aa)). 44–51 (GATGTGKT) contributes to the ATP binding site. A Beta-hairpin motif is present at residues 97 to 120 (YYDYYQPEAYVPSSDTYIEKDSSV). A Helicase C-terminal domain is found at 435 to 601 (QMDDLLGEIN…TIKKDIRGLI (167 aa)). The UVR domain occupies 627-662 (KEAINALQKQMQEAAELLDFELAAQMRDLILELKLM).

It belongs to the UvrB family. Forms a heterotetramer with UvrA during the search for lesions. Interacts with UvrC in an incision complex.

It is found in the cytoplasm. In terms of biological role, the UvrABC repair system catalyzes the recognition and processing of DNA lesions. A damage recognition complex composed of 2 UvrA and 2 UvrB subunits scans DNA for abnormalities. Upon binding of the UvrA(2)B(2) complex to a putative damaged site, the DNA wraps around one UvrB monomer. DNA wrap is dependent on ATP binding by UvrB and probably causes local melting of the DNA helix, facilitating insertion of UvrB beta-hairpin between the DNA strands. Then UvrB probes one DNA strand for the presence of a lesion. If a lesion is found the UvrA subunits dissociate and the UvrB-DNA preincision complex is formed. This complex is subsequently bound by UvrC and the second UvrB is released. If no lesion is found, the DNA wraps around the other UvrB subunit that will check the other stand for damage. The polypeptide is UvrABC system protein B (Streptococcus pyogenes serotype M6 (strain ATCC BAA-946 / MGAS10394)).